The primary structure comprises 1824 residues: Treslin (1824 aa).

Disordered regions lie at residues 542–572, 590–622, 907–973, 1001–1035, 1098–1117, 1189–1221, 1293–1388, 1459–1518, 1617–1650, and 1803–1824; these read EFYQSSTAGSSGSLRSKKRGTQCTPVRQKMK, AQKTQGDSGSAGSGKGTEKGGKKSSGDRTKPGL, SPSK…SGES, RHSSVFYSSSQPRSRNLDRVVSSSQLSHSEGKGKF, AVGCRTPQSPRTPNRTVGDN, VPENQVNVPDSPVFAKRHSPRLVTPGKNSSPEE, PFCN…DDDK, FEGK…QSSP, TPTHHPTSSQSPLASPLTPSPQSRGWPTPENLNS, and PLCQPRRRRTPSRTYSRKKLLD. The span at 546 to 555 shows a compositional bias: low complexity; it reads SSTAGSSGSL. The segment covering 562–572 has biased composition (polar residues); that stretch reads TQCTPVRQKMK. Over residues 605 to 619 the composition is skewed to basic and acidic residues; sequence GTEKGGKKSSGDRTK. Over residues 907-921 the composition is skewed to polar residues; sequence SPSKKSKMPRSQSVS. Residues 932–952 show a composition bias toward basic and acidic residues; that stretch reads SDVDNDDRHTLLTKKVSETPL. 2 stretches are compositionally biased toward polar residues: residues 1005 to 1014 and 1103 to 1114; these read VFYSSSQPRS and TPQSPRTPNRTV. The span at 1319-1345 shows a compositional bias: polar residues; that stretch reads RSGNTPVKESCSPSSNSQGITGTSPSP. Positions 1347–1370 are enriched in low complexity; that stretch reads KSLSSAVAKSSPSPSFGPSRSGVG. Polar residues predominate over residues 1462–1472; that stretch reads KQTTSTGTPLT. Positions 1480 to 1490 are enriched in basic and acidic residues; it reads TPDRRQREAEA. 2 stretches are compositionally biased toward polar residues: residues 1617 to 1629 and 1636 to 1650; these read TPTHHPTSSQSPL and SPQSRGWPTPENLNS. The segment covering 1807–1824 has biased composition (basic residues); that stretch reads PRRRRTPSRTYSRKKLLD.

This sequence belongs to the treslin family. In terms of assembly, interacts with topbp1 (via BRCT domains); interaction takes place in a cdk2-dependent manner. Component of the replisome complex.

It is found in the nucleus. Regulator of DNA replication and S/M and G2/M checkpoints. Regulates the triggering of DNA replication initiation via its interaction with topbp1 by participating in cdk2-mediated loading of cdc45l onto replication origins. Required for the transition from pre-replication complex (pre-RC) to pre-initiation complex (pre-IC). Required to prevent mitotic entry after treatment with ionizing radiation. The protein is Treslin (ticrr) of Danio rerio (Zebrafish).